Here is a 309-residue protein sequence, read N- to C-terminus: Diadenylate cyclase (309 aa).

Residues 144 to 301 (TITLYELFET…DGKIVFETDP (158 aa)) enclose the DAC domain.

The protein belongs to the adenylate cyclase family. DacZ subfamily. Mn(2+) is required as a cofactor.

The enzyme catalyses 2 ATP = 3',3'-c-di-AMP + 2 diphosphate. In terms of biological role, diadenylate cyclase that catalyzes the condensation of 2 ATP molecules into cyclic di-AMP (c-di-AMP). c-di-AMP is a second messenger for intracellular signal transduction involved in the control of important regulatory processes such as osmoregulation. This Methanocaldococcus jannaschii (strain ATCC 43067 / DSM 2661 / JAL-1 / JCM 10045 / NBRC 100440) (Methanococcus jannaschii) protein is Diadenylate cyclase.